Reading from the N-terminus, the 1067-residue chain is Receptor-type guanylate cyclase gcy-10 (1067 aa).

Positions 1–20 (MLKSLLIIVIVFLHRELCDG) are cleaved as a signal peptide. Topologically, residues 21 to 438 (IQLILFDNWP…CVAKSSCVNY (418 aa)) are extracellular. The N-linked (GlcNAc...) asparagine glycan is linked to Asn-411. The chain crosses the membrane as a helical span at residues 439–459 (IPHIIAAVVIVTIIVIAIVII). Over 460–1067 (VKQRRHKLNI…RGSIVPLQKA (608 aa)) the chain is Cytoplasmic. One can recognise a Protein kinase domain in the interval 509-791 (ALTSRRRVFG…ESISTVYPLS (283 aa)). ATP contacts are provided by residues 515 to 523 (RVFGSYALV) and Lys-534. In terms of domain architecture, Guanylate cyclase spans 859–989 (TVMFVQICDF…DTVNFASRMQ (131 aa)).

It belongs to the adenylyl cyclase class-4/guanylyl cyclase family. In terms of tissue distribution, expressed predominantly in AWC but also in AWB, ASI, ASJ and ASK sensory neurons and in I1 interneuron.

The protein resides in the cell membrane. It localises to the cell projection. Its subcellular location is the cilium. The catalysed reaction is GTP = 3',5'-cyclic GMP + diphosphate. Functionally, guanylate cyclase involved in the production of the second messenger cGMP. Regulates chemotaxis responses toward volatile odorants in AWC sensory neurons and their avoidance in AWB sensory neurons. May be involved in sensitivity to quinine by regulating egl-4 activity through the production of cGMP. Involved in phototransduction in ASJ neurons downstream of G protein coupled-photoreceptor lite-1. Required to maintain the expression of putative olfactory receptor str-2 in AWC neurons in adults. In AWB and AWC sensory neurons, mediates the recognition of food oders which subsequently allows for the detection of preferred food sources. Involved in AWB sensory neuron development and extension during postembryonic development, potentially via mediating localization of tub-1 and PI(4,5)P2 to membrane cilia. The sequence is that of Receptor-type guanylate cyclase gcy-10 from Caenorhabditis elegans.